The chain runs to 115 residues: Large ribosomal subunit protein bL19 (115 aa).

It belongs to the bacterial ribosomal protein bL19 family.

Functionally, this protein is located at the 30S-50S ribosomal subunit interface and may play a role in the structure and function of the aminoacyl-tRNA binding site. The sequence is that of Large ribosomal subunit protein bL19 from Buchnera aphidicola subsp. Schizaphis graminum (strain Sg).